The chain runs to 762 residues: Endonuclease MutS2 (762 aa).

ATP is bound at residue 333–340 (GVNAGGKT). A Smr domain is found at 688 to 762 (LDLRGQRSEE…GGSGVKIVKL (75 aa)).

This sequence belongs to the DNA mismatch repair MutS family. MutS2 subfamily. As to quaternary structure, homodimer. Binds to stalled ribosomes, contacting rRNA.

Its function is as follows. Endonuclease that is involved in the suppression of homologous recombination and thus may have a key role in the control of bacterial genetic diversity. In terms of biological role, acts as a ribosome collision sensor, splitting the ribosome into its 2 subunits. Detects stalled/collided 70S ribosomes which it binds and splits by an ATP-hydrolysis driven conformational change. Acts upstream of the ribosome quality control system (RQC), a ribosome-associated complex that mediates the extraction of incompletely synthesized nascent chains from stalled ribosomes and their subsequent degradation. Probably generates substrates for RQC. The chain is Endonuclease MutS2 from Helicobacter pylori (strain J99 / ATCC 700824) (Campylobacter pylori J99).